A 208-amino-acid chain; its full sequence is Cytochrome c oxidase assembly protein CtaG (208 aa).

The Cytoplasmic segment spans residues 1–19 (MPDTQPNVSPNPIRRRGLG). Residues 20–42 (RDATVASICGLVVALMVGASFAA) form a helical; Signal-anchor for type II membrane protein membrane-spanning segment. Over 43–208 (VPFYNWFCRT…TAPDKRKGNL (166 aa)) the chain is Periplasmic.

Belongs to the COX11/CtaG family.

The protein resides in the cell inner membrane. Its function is as follows. Exerts its effect at some terminal stage of cytochrome c oxidase synthesis, probably by being involved in the insertion of the copper B into subunit I. The chain is Cytochrome c oxidase assembly protein CtaG from Rhodopseudomonas palustris (strain HaA2).